Consider the following 556-residue polypeptide: Urocanate hydratase (556 aa).

NAD(+) contacts are provided by residues 52–53, Gln130, 176–178, Glu196, Arg201, 242–243, 263–267, 273–274, and Tyr322; these read GG, GMG, NA, QTSAH, and YL. Cys410 is an active-site residue. NAD(+) is bound at residue Gly492.

It belongs to the urocanase family. The cofactor is NAD(+).

The protein localises to the cytoplasm. It catalyses the reaction 4-imidazolone-5-propanoate = trans-urocanate + H2O. It functions in the pathway amino-acid degradation; L-histidine degradation into L-glutamate; N-formimidoyl-L-glutamate from L-histidine: step 2/3. Its function is as follows. Catalyzes the conversion of urocanate to 4-imidazolone-5-propionate. The chain is Urocanate hydratase from Bradyrhizobium diazoefficiens (strain JCM 10833 / BCRC 13528 / IAM 13628 / NBRC 14792 / USDA 110).